A 213-amino-acid polypeptide reads, in one-letter code: uncharacterized protein (213 aa).

Residues glycine 53, glutamate 74, and aspartate 97 each contribute to the S-adenosyl-L-methionine site.

This sequence belongs to the methyltransferase superfamily. YrrT family.

In terms of biological role, could be a S-adenosyl-L-methionine-dependent methyltransferase. This is an uncharacterized protein from Geobacillus sp. (strain WCH70).